Consider the following 561-residue polypeptide: Magnesium-chelatase 60 kDa subunit (561 aa).

2 disordered regions span residues 234–268 (PLQEAPPPPPPPPEPPEPNEGENQQDEQDQIDPLD) and 298–324 (RAASGGQGAGQEQIGNRRGRPLPSRKG). A compositionally biased stretch (pro residues) spans 237 to 249 (EAPPPPPPPPEPP). Over residues 250–265 (EPNEGENQQDEQDQID) the composition is skewed to acidic residues. Positions 314-323 (RRGRPLPSRK) are enriched in basic residues. A VWFA domain is found at 379–559 (VLIFAVDASG…KMADVLGAAL (181 aa)).

It belongs to the Mg-chelatase subunits D/I family.

It catalyses the reaction protoporphyrin IX + Mg(2+) + ATP + H2O = Mg-protoporphyrin IX + ADP + phosphate + 3 H(+). Its pathway is porphyrin-containing compound metabolism; bacteriochlorophyll biosynthesis. Involved in bacteriochlorophyll biosynthesis; introduces a magnesium ion into protoporphyrin IX to yield Mg-protoporphyrin IX. The chain is Magnesium-chelatase 60 kDa subunit (bchD) from Rhodobacter capsulatus (strain ATCC BAA-309 / NBRC 16581 / SB1003).